Consider the following 1208-residue polypeptide: Neural cell adhesion molecule L1-like protein (1208 aa).

Residues 1–24 form the signal peptide; that stretch reads MEPLLLGRGLIVYLMFLLLKFSKA. At 25–1082 the chain is on the extracellular side; sequence IEIPSSVQQV…LYDDISTQGW (1058 aa). 2 Ig-like C2-type domains span residues 35–124 and 128–223; these read PTII…EEIE and PSVP…MKLT. Intrachain disulfides connect Cys-57/Cys-109 and Cys-153/Cys-204. N-linked (GlcNAc...) asparagine glycans are attached at residues Lys-231 and Asn-299. Ig-like C2-type domains lie at 235–328, 331–417, 423–510, and 515–607; these read PKLL…VIVE, PRWT…ANID, PLIQ…ANLD, and TKLR…TQVT. 4 disulfides stabilise this stretch: Cys-262-Cys-310, Cys-352-Cys-401, Cys-445-Cys-494, and Cys-536-Cys-591. Asn-476 and Asn-482 each carry an N-linked (GlcNAc...) asparagine glycan. The DGEA motif lies at 555–558; that stretch reads DGEA. 2 N-linked (GlcNAc...) asparagine glycosylation sites follow: Asn-562 and Asn-580. Fibronectin type-III domains lie at 614-709, 714-807, 809-914, and 918-1015; these read PPEN…TPPA, NPQN…SGED, PDTA…TPEG, and QPTF…LGEG. The interval 693–716 is disordered; sequence GRSQPSQPSDHHETPPAAPDRNPQ. Residues Asn-767, Asn-822, Asn-945, and Asn-1026 are each glycosylated (N-linked (GlcNAc...) asparagine). A helical transmembrane segment spans residues 1083–1103; that stretch reads FIGLMCAIALLTLLLLTVCFV. Residues 1104–1208 lie on the Cytoplasmic side of the membrane; that stretch reads KRNRGGKYSV…SSTATFPLRA (105 aa). The disordered stretch occupies residues 1131-1163; sequence ETFGEYSDSDEKPLKGSLRSLNRDMQPTESADS. Residues Ser-1147, Ser-1160, and Ser-1180 each carry the phosphoserine modification. Over residues 1149–1161 the composition is skewed to polar residues; sequence RSLNRDMQPTESA. An FIG[AQ]Y motif is present at residues 1181-1185; the sequence is FIGAY. The interval 1189–1208 is disordered; the sequence is KEKGSVESNGSSTATFPLRA. The span at 1194-1208 shows a compositional bias: polar residues; it reads VESNGSSTATFPLRA.

The protein belongs to the immunoglobulin superfamily. L1/neurofascin/NgCAM family. As to quaternary structure, may interact with L1CAM. May interact with ITGB1/ITGA1 heterodimer and ITGB1/ITGA2 heterodimer as well as with ANK3. Cleavage by metalloprotease ADAM8 in the extracellular part generates 2 soluble forms (125 kDa and 165 kDa) in vitro and is inhibited by metalloprotease inhibitors. Cleaved by BACE1. Post-translationally, N-glycosylated. Contains N-linked oligosaccharides with a sulfated carbohydrate structure type HNK-1 (SO4-3-GlcUABeta1,3GalBeta1,4GlcNAc). In terms of processing, O-glycosylated. Expressed in the fetal and adult brain as well as in Schwann cell culture. Also detected in adult peripheral tissues.

Its subcellular location is the cell membrane. It localises to the secreted. The protein localises to the extracellular space. The protein resides in the extracellular matrix. Extracellular matrix and cell adhesion protein that plays a role in nervous system development and in synaptic plasticity. Both soluble and membranous forms promote neurite outgrowth of cerebellar and hippocampal neurons and suppress neuronal cell death. Plays a role in neuronal positioning of pyramidal neurons and in regulation of both the number of interneurons and the efficacy of GABAergic synapses. May play a role in regulating cell migration in nerve regeneration and cortical development. Potentiates integrin-dependent cell migration towards extracellular matrix proteins. Recruits ANK3 to the plasma membrane. In Homo sapiens (Human), this protein is Neural cell adhesion molecule L1-like protein (CHL1).